Reading from the N-terminus, the 532-residue chain is CTP synthase (532 aa).

Residues 1–267 (MAKFIFVTGG…QDIIIEQLQL (267 aa)) are amidoligase domain. Ser13 contributes to the CTP binding site. Ser13 provides a ligand contact to UTP. 14 to 19 (GLGKGI) contacts ATP. Tyr54 contributes to the L-glutamine binding site. An ATP-binding site is contributed by Asp71. Positions 71 and 141 each coordinate Mg(2+). CTP contacts are provided by residues 148-150 (DIE), 188-193 (KTKPIQ), and Lys224. UTP-binding positions include 188–193 (KTKPIQ) and Lys224. The region spanning 292 to 532 (EISFVGKYIE…FIKAIVENNK (241 aa)) is the Glutamine amidotransferase type-1 domain. Gly354 lines the L-glutamine pocket. Cys381 (nucleophile; for glutamine hydrolysis) is an active-site residue. Residues 382–385 (LGMQ), Glu405, and Arg461 contribute to the L-glutamine site. Active-site residues include His506 and Glu508.

The protein belongs to the CTP synthase family. Homotetramer.

It carries out the reaction UTP + L-glutamine + ATP + H2O = CTP + L-glutamate + ADP + phosphate + 2 H(+). The enzyme catalyses L-glutamine + H2O = L-glutamate + NH4(+). The catalysed reaction is UTP + NH4(+) + ATP = CTP + ADP + phosphate + 2 H(+). It functions in the pathway pyrimidine metabolism; CTP biosynthesis via de novo pathway; CTP from UDP: step 2/2. Allosterically activated by GTP, when glutamine is the substrate; GTP has no effect on the reaction when ammonia is the substrate. The allosteric effector GTP functions by stabilizing the protein conformation that binds the tetrahedral intermediate(s) formed during glutamine hydrolysis. Inhibited by the product CTP, via allosteric rather than competitive inhibition. Functionally, catalyzes the ATP-dependent amination of UTP to CTP with either L-glutamine or ammonia as the source of nitrogen. Regulates intracellular CTP levels through interactions with the four ribonucleotide triphosphates. This chain is CTP synthase, found in Mycoplasma mycoides subsp. mycoides SC (strain CCUG 32753 / NCTC 10114 / PG1).